Here is a 150-residue protein sequence, read N- to C-terminus: Arginine repressor (150 aa).

The protein belongs to the ArgR family.

It localises to the cytoplasm. Its pathway is amino-acid biosynthesis; L-arginine biosynthesis [regulation]. In terms of biological role, regulates arginine biosynthesis genes. This is Arginine repressor from Finegoldia magna (strain ATCC 29328 / DSM 20472 / WAL 2508) (Peptostreptococcus magnus).